Consider the following 800-residue polypeptide: MRKKRYVWLKSILVAILVFGSGVWINTSNGTNAQAATITQDTPINQIFTDTALAEKMKTVLGKTNVTDTVSQTDLDQVTTLQADRLGIKSIDGVEYLNNLTQINFSNNQLTDITPLKNLTKLVDILMNNNQIADITPLANLTNLTGLTLFNNQITDIDPLKNLTNLNRLELSSNTISDISALSGLTSLQQLSFGNQVTDLKPLANLTTLERLDISSNKVSDISVLAKLTNLESLIATNNQISDITPLGILTNLDELSLNGNQLKDIGTLASLTNLTDLDLANNQISNLAPLSGLTKLTELKLGANQISNISPLAGLTALTNLELNENQLEDISPISNLKNLTYLTLYFNNISDISPVSSLTKLQRLFFYNNKVSDVSSLANLTNINWLSAGHNQISDLTPLANLTRITQLGLNDQAWTNAPVNYKANVSIPNTVKNVTGALIAPATISDGGSYTEPDITWNLPSYTNEVSYTFSQPVTIGKGTTTFSGTVTQPLKAIFNVKFHVDGKETTKEVEAGNLLTEPAKPVKEGHTFVGWFDAQTGGTKWNFSTDKMPTNDINLYAQFSINSYTATFDNDGVTTSQTVDYQGLLQEPTAPTKEGYTFKGWYDAKTGGDKWDFATSKMPAKNITLYAQYSANSYTATFDVDGKSTTQAVDYQGLLKEPKAPTKAGYTFKGWYDEKTDGKKWDFATDKMPANDITLYAQFTKNPVAPPTTGGNTPPTTNNGGNTTPPSANIPGSDTSNTSTGNSASTTSTMNAYDPYNSKEASLPTTGDSDNALYLLLGLLAVGTAMALTKKARASK.

The signal sequence occupies residues 1–35 (MRKKRYVWLKSILVAILVFGSGVWINTSNGTNAQA). The region spanning 36-76 (ATITQDTPINQIFTDTALAEKMKTVLGKTNVTDTVSQTDLD) is the LRRNT domain. LRR repeat units follow at residues 77-98 (QVTT…EYLN), 99-120 (NLTQ…KNLT), 121-142 (KLVD…ANLT), 143-164 (NLTG…KNLT), 165-186 (NLNR…SGLT), 187-207 (SLQQ…ANLT), 208-229 (TLER…AKLT), 230-251 (NLES…GILT), 252-273 (NLDE…ASLT), 274-295 (NLTD…SGLT), 296-317 (KLTE…AGLT), 318-339 (ALTN…SNLK), 340-361 (NLTY…SSLT), 362-383 (KLQR…ANLT), and 384-405 (NINW…ANLT). The LRRCT domain maps to 416–505 (AWTNAPVNYK…AIFNVKFHVD (90 aa)). The stretch at 518 to 587 (LLTEPAKPVK…TTSQTVDYQG (70 aa)) is one B-1 repeat. Positions 518–706 (LLTEPAKPVK…ITLYAQFTKN (189 aa)) are 3 X approximate tandem repeats, type B. The B-2 repeat unit spans residues 588-657 (LLQEPTAPTK…STTQAVDYQG (70 aa)). Residues 658–706 (LLKEPKAPTKAGYTFKGWYDEKTDGKKWDFATDKMPANDITLYAQFTKN) form a B-3 repeat. The interval 705–757 (KNPVAPPTTGGNTPPTTNNGGNTTPPSANIPGSDTSNTSTGNSASTTSTMNAY) is disordered. Residues 711–753 (PTTGGNTPPTTNNGGNTTPPSANIPGSDTSNTSTGNSASTTST) are compositionally biased toward low complexity. An LPXTG sorting signal motif is present at residues 767–771 (LPTTG). Residue Thr770 is modified to Pentaglycyl murein peptidoglycan amidated threonine. Positions 771–800 (GDSDNALYLLLGLLAVGTAMALTKKARASK) are cleaved as a propeptide — removed by sortase A.

The protein belongs to the internalin family. In terms of assembly, interacts with host (human) cadherin-1 (CDH1). The formation of the complex between inlA and cadherin-1 is calcium-dependent. Mutagenesis studies show it is possible to increase the affinity of InlA for CDH1 by rational engineering of InlA residues.

Its subcellular location is the secreted. The protein resides in the cell wall. Its activity is regulated as follows. Bacterial uptake is inhibited by EDTA and by anti-E-cadherin antibodies. In terms of biological role, mediates the entry of L.monocytogenes into host intestinal epithelial cells; transformation with inlA alone allows L.innocua (a non-invasive species) to be taken up by host cells. Binds to human receptor cadherin-1 (E-cadherin, CDH1); the chicken homolog of cadherin-1 but not cadherin-2 function as receptors. Mouse cadherin-1 is not a receptor, however mutating a single surface-exposed residue (Glu-172 to Pro in mouse) allows cadherin-1 to act as a receptor for InlA. The sequence is that of Internalin A from Listeria monocytogenes serovar 1/2a (strain ATCC BAA-679 / EGD-e).